The primary structure comprises 272 residues: Indole-3-glycerol phosphate synthase (272 aa).

It belongs to the TrpC family.

The catalysed reaction is 1-(2-carboxyphenylamino)-1-deoxy-D-ribulose 5-phosphate + H(+) = (1S,2R)-1-C-(indol-3-yl)glycerol 3-phosphate + CO2 + H2O. It participates in amino-acid biosynthesis; L-tryptophan biosynthesis; L-tryptophan from chorismate: step 4/5. The sequence is that of Indole-3-glycerol phosphate synthase from Mycobacterium leprae (strain Br4923).